Here is a 137-residue protein sequence, read N- to C-terminus: Regulator of cell cycle RGCC (137 aa).

A disordered region spans residues 57–116; the sequence is LERMKRRSSASVSDSSGFSDSESADSVYRDSFTFSDEKLNSPTNSSPALLPSAVTPRKAK. The segment covering 65-82 has biased composition (low complexity); that stretch reads SASVSDSSGFSDSESADS. Phosphoserine is present on residues serine 67, serine 69, serine 71, serine 75, serine 91, and serine 97. Threonine 111 carries the phosphothreonine modification.

Interacts with CDK1 and PLK1. Interacts with SMAD3.

Its subcellular location is the cytoplasm. It localises to the nucleus. It is found in the cytoskeleton. The protein resides in the microtubule organizing center. The protein localises to the centrosome. Modulates the activity of cell cycle-specific kinases. Enhances CDK1 activity. May contribute to the regulation of the cell cycle. May inhibit growth of glioma cells by promoting arrest of mitotic progression at the G2/M transition. Fibrogenic factor contributing to the pathogenesis of renal fibrosis through fibroblast activation. This is Regulator of cell cycle RGCC (Rgcc) from Mus musculus (Mouse).